A 300-amino-acid chain; its full sequence is ESX-5 secretion-associated protein EspG5 (300 aa).

The protein belongs to the EspG family. Interacts specifically with ESX-5-dependent PE/PPE proteins. Forms a 1:1:1 heterotrimeric complex with the PE25/PPE41 dimer, via PPE41. Binding of EspG5 does not cause conformational changes in the PE25/PPE41 dimer. Forms a 1:1:1 heterotrimeric complex with the PE8/PPE15 dimer, via PPE15.

It localises to the cytoplasm. Functionally, specific chaperone for cognate PE/PPE proteins. Plays an important role in preventing aggregation of PE/PPE dimers. This Mycobacterium tuberculosis (strain ATCC 25618 / H37Rv) protein is ESX-5 secretion-associated protein EspG5.